The sequence spans 193 residues: Guanylate kinase (193 aa).

The Guanylate kinase-like domain maps to 8–188 (GRLVVLVGPS…ACEQLVSLFV (181 aa)). 15-22 (GPSAVGKS) lines the ATP pocket.

This sequence belongs to the guanylate kinase family.

It is found in the cytoplasm. The catalysed reaction is GMP + ATP = GDP + ADP. Functionally, essential for recycling GMP and indirectly, cGMP. The polypeptide is Guanylate kinase (Nocardia farcinica (strain IFM 10152)).